A 485-amino-acid chain; its full sequence is Glycogen synthase (485 aa).

ADP-alpha-D-glucose is bound at residue Lys17.

The protein belongs to the glycosyltransferase 1 family. Bacterial/plant glycogen synthase subfamily.

The enzyme catalyses [(1-&gt;4)-alpha-D-glucosyl](n) + ADP-alpha-D-glucose = [(1-&gt;4)-alpha-D-glucosyl](n+1) + ADP + H(+). It participates in glycan biosynthesis; glycogen biosynthesis. Its function is as follows. Synthesizes alpha-1,4-glucan chains using ADP-glucose. The sequence is that of Glycogen synthase from Novosphingobium aromaticivorans (strain ATCC 700278 / DSM 12444 / CCUG 56034 / CIP 105152 / NBRC 16084 / F199).